Consider the following 319-residue polypeptide: GTPase Era (319 aa).

The region spanning 9–196 (RSGVSLIIGR…MRTLRDLLPE (188 aa)) is the Era-type G domain. A G1 region spans residues 17-24 (GRPSSGKS). 17–24 (GRPSSGKS) is a GTP binding site. Residues 43–47 (QTTRN) are G2. The segment at 64-67 (DTPG) is G3. Residues 64 to 68 (DTPGY) and 127 to 130 (NKVD) each bind GTP. Positions 127–130 (NKVD) are G4. A G5 region spans residues 175 to 177 (ISA). The 77-residue stretch at 227–303 (CRDELPHALY…HISLDIRVKV (77 aa)) folds into the KH type-2 domain.

The protein belongs to the TRAFAC class TrmE-Era-EngA-EngB-Septin-like GTPase superfamily. Era GTPase family. Monomer.

Its subcellular location is the cytoplasm. It is found in the cell inner membrane. Its function is as follows. An essential GTPase that binds both GDP and GTP, with rapid nucleotide exchange. Plays a role in 16S rRNA processing and 30S ribosomal subunit biogenesis and possibly also in cell cycle regulation and energy metabolism. In Treponema pallidum (strain Nichols), this protein is GTPase Era.